Consider the following 113-residue polypeptide: MAGLKDVVTREYTINMHKRLHGVSFKKRAPKAVKEIKKFAKLHMGTEDVRLAPELNQEIWKRGVKGVAFRLRLRISRKRNEEENAKNPLFSYVEPVFVASAKGLQTTVVEEDA.

Belongs to the eukaryotic ribosomal protein eL31 family.

The protein is Large ribosomal subunit protein eL31 (RPL31) of Candida glabrata (strain ATCC 2001 / BCRC 20586 / JCM 3761 / NBRC 0622 / NRRL Y-65 / CBS 138) (Yeast).